Here is an 820-residue protein sequence, read N- to C-terminus: MNISYNWLKEYVNFDLTPDEVAAALTSIGLETGGVEEVQTIKGGLEGLVIGEVLTCVEHPNSDHLHITTVNLGNGEPTQIVCGAPNVAAGQKVVVATLGTKLYDGDECFTIKKSKIRGVESIGMICAEDEIGIGTSHDGIIVLPEDAVPGTLAKDYYNVKSDYVLEVDITPNRADACSHYGVARDLYAYLVQNGKQAALTRPSVDAFAVENHDLDIKVTVENSEACPRYAGVTVKGVTVKESPEWLQNKLRIIGLRPINNVVDITNYIVHAFGQPLHCFDANKIKGGEVIVKTMPEGTTFVTLDGVERKLNERDLMICNKEDAMCIAGVFGGLDSGSTEATTDVFLESAYFHPTWVRKTARRHGLNTDASFRFERGIDPNITIYCLKLAAMMVKELAGGTISSEIKDVCAAPAQDFIVELTYEKVHSLIGKVIPAETIKSIVTSLEMKIMDETAEGLTLAVPPYRVDVQRDCDVIEDILRIYGYNNVEIPSTLKSSLTTKGDCDKSNKLQNLVAEQLVGCGFNEILNNSLTRAAYYDGLESYPSKNLVMLLNPLSADLNCMRQTLLFGGLESIAHNANRKNADLKFFEFGNCYHFDAEKKNPEKVLAPYSEDYHLGLWVTGKMVSNSWAHADENTSVYELKAYVENIFKRLGLDLHSLVVGNLSDDIYSTALTVNTKGGKRLATFGVVTKKMLKAFDVDNEVYYADLNWKELMKAIRSVKVSYKEISKFPAVKRDLALLLDKKVQFAEIEKIAYETEKKLLKEVSLFDVYEGKNLEAGKKSYAVSFLLQDESQTLNDKMIDKIMSKLVKNLEDKLGAKLR.

The tRNA-binding domain occupies 42–154 (KGGLEGLVIG…EDAVPGTLAK (113 aa)). The B5 domain occupies 413-489 (AQDFIVELTY…RIYGYNNVEI (77 aa)). The Mg(2+) site is built by Asp467, Asp473, Glu476, and Asp477. One can recognise an FDX-ACB domain in the interval 727–820 (SKFPAVKRDL…LEDKLGAKLR (94 aa)).

The protein belongs to the phenylalanyl-tRNA synthetase beta subunit family. Type 1 subfamily. As to quaternary structure, tetramer of two alpha and two beta subunits. The cofactor is Mg(2+).

It is found in the cytoplasm. The catalysed reaction is tRNA(Phe) + L-phenylalanine + ATP = L-phenylalanyl-tRNA(Phe) + AMP + diphosphate + H(+). This Bacteroides fragilis (strain YCH46) protein is Phenylalanine--tRNA ligase beta subunit.